Reading from the N-terminus, the 379-residue chain is Cytochrome-c peroxidase IdrP1 (379 aa).

Positions 1–24 (MNNRKPLQLSLLVASLAVAFTASA) are cleaved as a signal peptide. 2 consecutive Cytochrome c domains span residues 50 to 158 (EKIA…DAFK) and 204 to 355 (TSQK…EALS). Heme c contacts are provided by cysteine 72, cysteine 75, histidine 76, cysteine 219, cysteine 222, and histidine 223.

The iodate reductase (Idr) complex is composed of a molybdopterin-dependent iodate reductase (IdrA and IdrB subunits) and two associated peroxidases (IdrP1 and IdrP2). It depends on heme c as a cofactor.

Its subcellular location is the periplasm. The enzyme catalyses 2 Fe(II)-[cytochrome c] + H2O2 + 2 H(+) = 2 Fe(III)-[cytochrome c] + 2 H2O. Involved in iodate respiration. Probably reduces the H(2)O(2) produced by IdrA/IdrB to H(2)O, using a reduced cytochrome c as the electron donor. This chain is Cytochrome-c peroxidase IdrP1, found in Pseudomonas sp. (strain SCT).